The chain runs to 434 residues: 3-isopropylmalate dehydratase large subunit 1 (434 aa).

[4Fe-4S] cluster is bound by residues Cys-308, Cys-368, and Cys-371.

The protein belongs to the aconitase/IPM isomerase family. LeuC type 2 subfamily. As to quaternary structure, heterodimer of LeuC and LeuD. Requires [4Fe-4S] cluster as cofactor.

The catalysed reaction is (2R,3S)-3-isopropylmalate = (2S)-2-isopropylmalate. It participates in amino-acid biosynthesis; L-leucine biosynthesis; L-leucine from 3-methyl-2-oxobutanoate: step 2/4. Its function is as follows. Catalyzes the isomerization between 2-isopropylmalate and 3-isopropylmalate, via the formation of 2-isopropylmaleate. In Deinococcus radiodurans (strain ATCC 13939 / DSM 20539 / JCM 16871 / CCUG 27074 / LMG 4051 / NBRC 15346 / NCIMB 9279 / VKM B-1422 / R1), this protein is 3-isopropylmalate dehydratase large subunit 1.